A 183-amino-acid polypeptide reads, in one-letter code: Ribulose bisphosphate carboxylase small subunit, chloroplastic 7 (183 aa).

Residues 1–43 (MAAAMMNKTVVVGKESVKGGVAPKVAMSRGGFLNSGIMKKDRD) constitute a chloroplast transit peptide.

Belongs to the RuBisCO small chain family. As to quaternary structure, heterohexadecamer of 8 large and 8 small subunits.

It is found in the plastid. Its subcellular location is the chloroplast. Functionally, ruBisCO catalyzes two reactions: the carboxylation of D-ribulose 1,5-bisphosphate, the primary event in carbon dioxide fixation, as well as the oxidative fragmentation of the pentose substrate. Both reactions occur simultaneously and in competition at the same active site. Although the small subunit is not catalytic it is essential for maximal activity. The sequence is that of Ribulose bisphosphate carboxylase small subunit, chloroplastic 7 from Acetabularia peniculus (Green alga).